Reading from the N-terminus, the 746-residue chain is Polyribonucleotide nucleotidyltransferase (746 aa).

2 residues coordinate Mg(2+): D520 and D526. The 63-residue stretch at 586–648 (PRIITVKVPV…EAARAAVNAI (63 aa)) folds into the KH domain. The 73-residue stretch at 657 to 729 (GERYLGTVVK…PRGKLSLVPV (73 aa)) folds into the S1 motif domain.

It belongs to the polyribonucleotide nucleotidyltransferase family. Requires Mg(2+) as cofactor.

It is found in the cytoplasm. It carries out the reaction RNA(n+1) + phosphate = RNA(n) + a ribonucleoside 5'-diphosphate. Involved in mRNA degradation. Catalyzes the phosphorolysis of single-stranded polyribonucleotides processively in the 3'- to 5'-direction. This chain is Polyribonucleotide nucleotidyltransferase, found in Kineococcus radiotolerans (strain ATCC BAA-149 / DSM 14245 / SRS30216).